The chain runs to 170 residues: Inosine/xanthosine triphosphatase (170 aa).

Belongs to the YjjX NTPase family. As to quaternary structure, homodimer. Mg(2+) is required as a cofactor. The cofactor is Mn(2+).

The catalysed reaction is XTP + H2O = XDP + phosphate + H(+). It carries out the reaction ITP + H2O = IDP + phosphate + H(+). In terms of biological role, phosphatase that hydrolyzes non-canonical purine nucleotides such as XTP and ITP to their respective diphosphate derivatives. Probably excludes non-canonical purines from DNA/RNA precursor pool, thus preventing their incorporation into DNA/RNA and avoiding chromosomal lesions. This is Inosine/xanthosine triphosphatase from Aliivibrio fischeri (strain MJ11) (Vibrio fischeri).